The sequence spans 182 residues: Carbonic anhydrase (182 aa).

Positions 64, 81, and 86 each coordinate Mg(2+).

Belongs to the gamma-class carbonic anhydrase family. As to quaternary structure, homotrimer. Requires Mg(2+) as cofactor. Zn(2+) serves as cofactor.

The catalysed reaction is hydrogencarbonate + H(+) = CO2 + H2O. Reversible hydration of carbon dioxide. The protein is Carbonic anhydrase of Geobacillus kaustophilus (strain HTA426).